A 306-amino-acid polypeptide reads, in one-letter code: uncharacterized protein (306 aa).

Transmembrane regions (helical) follow at residues 6-26 (VQIM…FPGI), 37-57 (HLAL…AVLT), 67-87 (IPAI…LLNI), 91-111 (TVSA…SAML), 125-145 (WLGS…AGDF), 148-168 (SMSG…YFVF), 177-197 (GFIP…LVFL), 213-233 (LSIV…LAYV), and 251-271 (ALAL…LSLL). EamA domains lie at 17 to 140 (GLWA…LIAF) and 160 to 285 (FSES…FTYL).

Belongs to the EamA transporter family.

The protein resides in the cell membrane. This is an uncharacterized protein from Bacillus subtilis (strain 168).